A 166-amino-acid chain; its full sequence is Lithostathine-1-beta (166 aa).

Positions 1–22 (MAQTNSFFMLISSLMFLSLSQG) are cleaved as a signal peptide. The O-linked (GalNAc...) threonine glycan is linked to Thr27. The C-type lectin domain maps to 34 to 164 (ISCPEGTNAY…EKKFSFVCKF (131 aa)). 3 disulfides stabilise this stretch: Cys36–Cys47, Cys64–Cys162, and Cys137–Cys154.

Post-translationally, all O-linked glycans consist of Gal-GlcNAc-Gal-GalNAc tetrasaccharide core and get elongated (microheterogeneity).

It is found in the secreted. In terms of biological role, might act as an inhibitor of spontaneous calcium carbonate precipitation. May be associated with neuronal sprouting in brain, and with brain and pancreas regeneration. In Homo sapiens (Human), this protein is Lithostathine-1-beta (REG1B).